The following is a 233-amino-acid chain: UPF0173 metal-dependent hydrolase Igni_1254 (233 aa).

It belongs to the UPF0173 family.

This chain is UPF0173 metal-dependent hydrolase Igni_1254, found in Ignicoccus hospitalis (strain KIN4/I / DSM 18386 / JCM 14125).